Consider the following 309-residue polypeptide: Anamorsin homolog (309 aa).

Residues 4–169 (VSPGHSVLLL…SYEVGSSAQL (166 aa)) are N-terminal SAM-like domain. Residues 170–218 (TLSFAKKKQVEKPKLDENTAKIWSLSAVDMNDDDIDLLDPDELLDEEDL) form a linker region. The [2Fe-2S] cluster site is built by C230, C242, C245, and C247. The interval 230–247 (CGTGGDTKKRKACKNCTC) is fe-S binding site A. [4Fe-4S] cluster is bound by residues C270, C273, C281, and C284. Short sequence motifs (cx2C motif) lie at residues 270–273 (CGNC) and 281–284 (CASC). Positions 270–284 (CGNCYLGDAFRCASC) are fe-S binding site B.

This sequence belongs to the anamorsin family. In terms of assembly, monomer. Requires [2Fe-2S] cluster as cofactor. It depends on [4Fe-4S] cluster as a cofactor.

It is found in the cytoplasm. The protein localises to the mitochondrion intermembrane space. Functionally, component of the cytosolic iron-sulfur (Fe-S) protein assembly (CIA) machinery. Required for the maturation of extramitochondrial Fe-S proteins. Part of an electron transfer chain functioning in an early step of cytosolic Fe-S biogenesis, facilitating the de novo assembly of a [4Fe-4S] cluster on the cytosolic Fe-S scaffold complex. Electrons are transferred from NADPH via a FAD- and FMN-containing diflavin oxidoreductase. Together with the diflavin oxidoreductase, also required for the assembly of the diferric tyrosyl radical cofactor of ribonucleotide reductase (RNR), probably by providing electrons for reduction during radical cofactor maturation in the catalytic small subunit. In Branchiostoma floridae (Florida lancelet), this protein is Anamorsin homolog.